We begin with the raw amino-acid sequence, 638 residues long: 1,4-alpha-glucan branching enzyme GlgB (638 aa).

The active-site Nucleophile is the aspartate 320. Catalysis depends on glutamate 373, which acts as the Proton donor.

The protein belongs to the glycosyl hydrolase 13 family. GlgB subfamily. As to quaternary structure, monomer.

The enzyme catalyses Transfers a segment of a (1-&gt;4)-alpha-D-glucan chain to a primary hydroxy group in a similar glucan chain.. It functions in the pathway glycan biosynthesis; glycogen biosynthesis. Its function is as follows. Catalyzes the formation of the alpha-1,6-glucosidic linkages in glycogen by scission of a 1,4-alpha-linked oligosaccharide from growing alpha-1,4-glucan chains and the subsequent attachment of the oligosaccharide to the alpha-1,6 position. The polypeptide is 1,4-alpha-glucan branching enzyme GlgB (Oleidesulfovibrio alaskensis (strain ATCC BAA-1058 / DSM 17464 / G20) (Desulfovibrio alaskensis)).